The sequence spans 330 residues: MLKESEDIEGIAIEGPWLEDDISLEEIIKKYYLKIGFQASHIGKAIKIWKHIEEKRKKGDEITVFFGYTSNIVSSGLREIIAYLVKHKKIDIIVTTAGGVEEDFIKCLKPFILGDWEVDGKMLREKGINRIGNIFVPNDRYIAFEEYMMEFFEEILNLQRETGKIITASEFCYKLGEFMDKKLKSKEKEKSILYWAYKNNIPIFCPAITDGSIGDMLYFFKKYNKDEELKIDVANDIVKLNDIAINSKETACIVLGGSLPKHSIINANLFREGTDYAIYVTTALPWDGSLSGAPPEEGVSWGKIGAKADYVEIWGDATIIFPLLVYCVMK.

Lys-303 serves as the catalytic Nucleophile.

The protein belongs to the deoxyhypusine synthase family. NAD(+) serves as cofactor.

It carries out the reaction [eIF5A protein]-L-lysine + spermidine = [eIF5A protein]-deoxyhypusine + propane-1,3-diamine. Its pathway is protein modification; eIF5A hypusination. Catalyzes the NAD-dependent oxidative cleavage of spermidine and the subsequent transfer of the butylamine moiety of spermidine to the epsilon-amino group of a specific lysine residue of the eIF-5A precursor protein to form the intermediate deoxyhypusine residue. This is Probable deoxyhypusine synthase (dys) from Methanocaldococcus jannaschii (strain ATCC 43067 / DSM 2661 / JAL-1 / JCM 10045 / NBRC 100440) (Methanococcus jannaschii).